A 210-amino-acid chain; its full sequence is Cancer/testis antigen 2 (210 aa).

2 stretches are compositionally biased toward gly residues: residues 1-47 (MQAE…GPRG) and 56-66 (PRGGAPRGPHG). Disordered stretches follow at residues 1 to 80 (MQAE…PCGA) and 154 to 197 (GLGS…DGCR). A compositionally biased stretch (basic and acidic residues) spans 163–177 (QKARDLRTPKHKVSE).

Belongs to the CTAG/PCC1 family. Testis and very low level in placenta and in some uterus samples. Observed in 25-50% of tumor samples of melanomas, non-small-cell lung carcinomas, bladder, prostate and head and neck cancers.

The polypeptide is Cancer/testis antigen 2 (CTAG2) (Homo sapiens (Human)).